Here is a 393-residue protein sequence, read N- to C-terminus: Na(+)/H(+) antiporter NhaA (393 aa).

11 helical membrane passes run 24 to 44 (GGLV…SPLA), 58 to 78 (LSLL…LVGL), 96 to 116 (ILPG…YILF), 126 to 146 (GWAI…SLFG), 155 to 175 (IFLA…IALF), 178 to 198 (SDLN…LYGM), 214 to 234 (AVLW…GVLL), 267 to 287 (VAFI…FSGV), 300 to 320 (VAAG…FLLV), 338 to 358 (GVAA…LLAF), and 369 to 389 (MGIL…LATF).

Belongs to the NhaA Na(+)/H(+) (TC 2.A.33) antiporter family.

The protein resides in the cell inner membrane. The enzyme catalyses Na(+)(in) + 2 H(+)(out) = Na(+)(out) + 2 H(+)(in). In terms of biological role, na(+)/H(+) antiporter that extrudes sodium in exchange for external protons. This Rhizobium etli (strain ATCC 51251 / DSM 11541 / JCM 21823 / NBRC 15573 / CFN 42) protein is Na(+)/H(+) antiporter NhaA.